The chain runs to 237 residues: uncharacterized protein (237 aa).

21–28 (GCDGSGKS) is a binding site for ATP.

To E.coli YghR and YghT.

This is an uncharacterized protein from Escherichia coli (strain K12).